A 213-amino-acid chain; its full sequence is Large ribosomal subunit protein uL1 (213 aa).

It belongs to the universal ribosomal protein uL1 family. In terms of assembly, part of the 50S ribosomal subunit.

Probably involved in E site tRNA release. Binds directly to 23S rRNA. Functionally, protein L1 is also a translational repressor protein, it controls the translation of its operon by binding to its mRNA. This chain is Large ribosomal subunit protein uL1, found in Methanothermococcus thermolithotrophicus (Methanococcus thermolithotrophicus).